Here is a 313-residue protein sequence, read N- to C-terminus: C-type lectin domain-containing protein 162 (313 aa).

The signal sequence occupies residues 1–17 (MNIFTLLFIYFLSDTVA). N-linked (GlcNAc...) asparagine glycans are attached at residues asparagine 28 and asparagine 41. The C-type lectin domain maps to 28–145 (NATGCFQFFR…DAMFLPFVCE (118 aa)). Cysteines 49 and 144 form a disulfide. Asparagine 213 carries N-linked (GlcNAc...) asparagine glycosylation. The tract at residues 244–313 (VSQTETEMSR…RSKTIQISRG (70 aa)) is disordered. A compositionally biased stretch (basic and acidic residues) spans 250–259 (EMSRSRKEKE). Residues asparagine 279 and asparagine 300 are each glycosylated (N-linked (GlcNAc...) asparagine). A compositionally biased stretch (basic and acidic residues) spans 291-304 (SKEKREREENETIR).

The protein resides in the secreted. The polypeptide is C-type lectin domain-containing protein 162 (clec-162) (Caenorhabditis elegans).